The following is a 119-amino-acid chain: Large ribosomal subunit protein bL20 (119 aa).

The protein belongs to the bacterial ribosomal protein bL20 family.

Functionally, binds directly to 23S ribosomal RNA and is necessary for the in vitro assembly process of the 50S ribosomal subunit. It is not involved in the protein synthesizing functions of that subunit. This is Large ribosomal subunit protein bL20 from Streptococcus mutans serotype c (strain ATCC 700610 / UA159).